A 200-amino-acid chain; its full sequence is Crossover junction endodeoxyribonuclease RuvC (200 aa).

Active-site residues include Asp-18, Glu-78, and Asp-151. Mg(2+) is bound by residues Asp-18, Glu-78, and Asp-151.

This sequence belongs to the RuvC family. As to quaternary structure, homodimer which binds Holliday junction (HJ) DNA. The HJ becomes 2-fold symmetrical on binding to RuvC with unstacked arms; it has a different conformation from HJ DNA in complex with RuvA. In the full resolvosome a probable DNA-RuvA(4)-RuvB(12)-RuvC(2) complex forms which resolves the HJ. Mg(2+) serves as cofactor.

The protein resides in the cytoplasm. It carries out the reaction Endonucleolytic cleavage at a junction such as a reciprocal single-stranded crossover between two homologous DNA duplexes (Holliday junction).. The RuvA-RuvB-RuvC complex processes Holliday junction (HJ) DNA during genetic recombination and DNA repair. Endonuclease that resolves HJ intermediates. Cleaves cruciform DNA by making single-stranded nicks across the HJ at symmetrical positions within the homologous arms, yielding a 5'-phosphate and a 3'-hydroxyl group; requires a central core of homology in the junction. The consensus cleavage sequence is 5'-(A/T)TT(C/G)-3'. Cleavage occurs on the 3'-side of the TT dinucleotide at the point of strand exchange. HJ branch migration catalyzed by RuvA-RuvB allows RuvC to scan DNA until it finds its consensus sequence, where it cleaves and resolves the cruciform DNA. The chain is Crossover junction endodeoxyribonuclease RuvC from Cytophaga hutchinsonii (strain ATCC 33406 / DSM 1761 / CIP 103989 / NBRC 15051 / NCIMB 9469 / D465).